The sequence spans 609 residues: Proteasome-associated ATPase (609 aa).

Positions 1–24 are disordered; sequence MGESERSEAFGIPRDSPLSSGDAA. Residues 20 to 96 are a coiled coil; that stretch reads SGDAAELEQL…LREEVDRLGQ (77 aa). Residue 296–301 coordinates ATP; it reads GCGKTL. The docks into pockets in the proteasome alpha-ring stretch occupies residues 608 to 609; sequence YL.

It belongs to the AAA ATPase family. In terms of assembly, homohexamer. Assembles into a hexameric ring structure that caps the 20S proteasome core. Strongly interacts with the prokaryotic ubiquitin-like protein Pup through a hydrophobic interface; the interacting region of ARC lies in its N-terminal coiled-coil domain. There is one Pup binding site per ARC hexamer ring. Upon ATP-binding, the C-terminus of ARC interacts with the alpha-rings of the proteasome core, possibly by binding to the intersubunit pockets.

The protein operates within protein degradation; proteasomal Pup-dependent pathway. ATPase which is responsible for recognizing, binding, unfolding and translocation of pupylated proteins into the bacterial 20S proteasome core particle. May be essential for opening the gate of the 20S proteasome via an interaction with its C-terminus, thereby allowing substrate entry and access to the site of proteolysis. Thus, the C-termini of the proteasomal ATPase may function like a 'key in a lock' to induce gate opening and therefore regulate proteolysis. The protein is Proteasome-associated ATPase of Mycobacterium bovis (strain BCG / Pasteur 1173P2).